The following is a 431-amino-acid chain: Nocturnin (431 aa).

The N-terminal 75 residues, 1-75, are a transit peptide targeting the mitochondrion; it reads MFHSPRRLCS…SMGTGTSRLY (75 aa). A compositionally biased stretch (low complexity) spans 20–31; sequence LRRLPAPGLRRP. Residues 20–41 form a disordered region; the sequence is LRRLPAPGLRRPLSPPAAVPRP. Residues 32–41 are compositionally biased toward pro residues; it reads LSPPAAVPRP. Residue Glu-195 participates in Mg(2+) binding. Substrate-binding positions include Glu-195, 219 to 221, Asn-263, 286 to 289, and 324 to 326; these read KPW, HLKA, and DFN. The segment at 343-353 is interaction with PPARG; the sequence is NLNSAYKLLSA. His-414 contributes to the substrate binding site.

The protein belongs to the CCR4/nocturin family. As to quaternary structure, interacts with PPARG. Mg(2+) is required as a cofactor. In terms of tissue distribution, adipose tissue. Expression is higher in subcutaneous adipose tissue as compared to visceral adipose tissue.

Its subcellular location is the cytoplasm. The protein localises to the nucleus. It localises to the perinuclear region. It is found in the mitochondrion. The catalysed reaction is NADP(+) + H2O = phosphate + NAD(+). The enzyme catalyses NADPH + H2O = phosphate + NADH. Phosphatase which catalyzes the conversion of NADP(+) to NAD(+) and of NADPH to NADH. Shows a small preference for NADPH over NADP(+). Represses translation and promotes degradation of target mRNA molecules. Plays an important role in post-transcriptional regulation of metabolic genes under circadian control. Exerts a rhythmic post-transcriptional control of genes necessary for metabolic functions including nutrient absorption, glucose/insulin sensitivity, lipid metabolism, adipogenesis, inflammation and osteogenesis. Plays an important role in favoring adipogenesis over osteoblastogenesis and acts as a key regulator of the adipogenesis/osteogenesis balance. Promotes adipogenesis by facilitating PPARG nuclear translocation which activates its transcriptional activity. Regulates circadian expression of NOS2 in the liver and negatively regulates the circadian expression of IGF1 in the bone. Critical for proper development of early embryos. The polypeptide is Nocturnin (Homo sapiens (Human)).